Here is a 213-residue protein sequence, read N- to C-terminus: Orotate phosphoribosyltransferase (213 aa).

Residue K26 coordinates 5-phospho-alpha-D-ribose 1-diphosphate. 34-35 is an orotate binding site; the sequence is FF. Residues 72–73, R99, K100, K103, H105, and 124–132 contribute to the 5-phospho-alpha-D-ribose 1-diphosphate site; these read YK and DDVITAGTA. Orotate is bound by residues T128 and R156.

This sequence belongs to the purine/pyrimidine phosphoribosyltransferase family. PyrE subfamily. As to quaternary structure, homodimer. Requires Mg(2+) as cofactor.

The catalysed reaction is orotidine 5'-phosphate + diphosphate = orotate + 5-phospho-alpha-D-ribose 1-diphosphate. It functions in the pathway pyrimidine metabolism; UMP biosynthesis via de novo pathway; UMP from orotate: step 1/2. In terms of biological role, catalyzes the transfer of a ribosyl phosphate group from 5-phosphoribose 1-diphosphate to orotate, leading to the formation of orotidine monophosphate (OMP). The polypeptide is Orotate phosphoribosyltransferase (Salmonella paratyphi A (strain ATCC 9150 / SARB42)).